A 146-amino-acid polypeptide reads, in one-letter code: MKDELNKVVIYTDGACSGNPGPGGWAAVLLFDDNEKTICGNDSDTTNNRMELTAVIEALKLLKVAYNVDLYTDSVYVKDGITLWIRKWKVNGWKTANKMPVKNLELWLELDSLANFHKVTWYWVRAHVGDLYNQKADMLARSQIVR.

Positions 4 to 145 (ELNKVVIYTD…ADMLARSQIV (142 aa)) constitute an RNase H type-1 domain. Mg(2+) is bound by residues Asp-13, Glu-51, Asp-73, and Asp-137.

Belongs to the RNase H family. In terms of assembly, monomer. Requires Mg(2+) as cofactor.

The protein resides in the cytoplasm. The enzyme catalyses Endonucleolytic cleavage to 5'-phosphomonoester.. Its function is as follows. Endonuclease that specifically degrades the RNA of RNA-DNA hybrids. This chain is Ribonuclease H, found in Ehrlichia chaffeensis (strain ATCC CRL-10679 / Arkansas).